The primary structure comprises 493 residues: Ubiquitin carboxyl-terminal hydrolase 14 (493 aa).

One can recognise a Ubiquitin-like domain in the interval 4–80; sequence YSVTVKWGKE…MMGSADALPE (77 aa). Phosphothreonine is present on Thr52. A USP domain is found at 105–483; that stretch reads CGLTNLGNTC…IAYVLLYGPR (379 aa). The Nucleophile role is filled by Cys114. Ser143 and Ser148 each carry phosphoserine. Thr235 is modified (phosphothreonine). Phosphoserine is present on residues Ser237, Ser302, and Ser432. Catalysis depends on His435, which acts as the Proton acceptor. N6-acetyllysine is present on Lys449.

This sequence belongs to the peptidase C19 family. USP14/UBP6 subfamily. As to quaternary structure, homodimer (Potential). Associates with the 26S proteasome. Interacts with FANCC, CXCR4 and ERN1. Interacts with TRIM14; this interaction recruits USP14 to cleave ubiquitin chains of CGAS and KDM4D.

Its subcellular location is the cytoplasm. The protein resides in the cell membrane. It catalyses the reaction Thiol-dependent hydrolysis of ester, thioester, amide, peptide and isopeptide bonds formed by the C-terminal Gly of ubiquitin (a 76-residue protein attached to proteins as an intracellular targeting signal).. In terms of biological role, proteasome-associated deubiquitinase which releases ubiquitin from the proteasome targeted ubiquitinated proteins. Ensures the regeneration of ubiquitin at the proteasome. Is a reversibly associated subunit of the proteasome and a large fraction of proteasome-free protein exists within the cell. Required for the degradation of the chemokine receptor CXCR4 which is critical for CXCL12-induced cell chemotaxis. Also serves as a physiological inhibitor of endoplasmic reticulum-associated degradation (ERAD) under the non-stressed condition by inhibiting the degradation of unfolded endoplasmic reticulum proteins via interaction with ERN1. Indispensable for synaptic development and function at neuromuscular junctions (NMJs). Plays a role in the innate immune defense against viruses by stabilizing the viral DNA sensor CGAS and thus inhibiting its autophagic degradation. Inhibits OPTN-mediated selective autophagic degradation of KDM4D and thereby negatively regulates H3K9me2 and H3K9me3. The polypeptide is Ubiquitin carboxyl-terminal hydrolase 14 (USP14) (Pan troglodytes (Chimpanzee)).